Here is a 265-residue protein sequence, read N- to C-terminus: Ribosomal RNA small subunit methyltransferase A (265 aa).

S-adenosyl-L-methionine is bound by residues His13, Leu15, Gly40, Glu61, Asp85, and Asn103.

Belongs to the class I-like SAM-binding methyltransferase superfamily. rRNA adenine N(6)-methyltransferase family. RsmA subfamily.

It is found in the cytoplasm. The enzyme catalyses adenosine(1518)/adenosine(1519) in 16S rRNA + 4 S-adenosyl-L-methionine = N(6)-dimethyladenosine(1518)/N(6)-dimethyladenosine(1519) in 16S rRNA + 4 S-adenosyl-L-homocysteine + 4 H(+). In terms of biological role, specifically dimethylates two adjacent adenosines (A1518 and A1519) in the loop of a conserved hairpin near the 3'-end of 16S rRNA in the 30S particle. May play a critical role in biogenesis of 30S subunits. The chain is Ribosomal RNA small subunit methyltransferase A from Bordetella pertussis (strain Tohama I / ATCC BAA-589 / NCTC 13251).